The following is a 326-amino-acid chain: Sulfate/thiosulfate import ATP-binding protein CysA (326 aa).

The region spanning 3–237 (IEVRNVSKNF…PSNDFVYHFL (235 aa)) is the ABC transporter domain. An ATP-binding site is contributed by 35-42 (GPSGCGKT).

This sequence belongs to the ABC transporter superfamily. Sulfate/tungstate importer (TC 3.A.1.6) family. The complex is composed of two ATP-binding proteins (CysA), two transmembrane proteins (CysT and CysW) and a solute-binding protein (CysP).

The protein localises to the cell inner membrane. The enzyme catalyses sulfate(out) + ATP + H2O = sulfate(in) + ADP + phosphate + H(+). The catalysed reaction is thiosulfate(out) + ATP + H2O = thiosulfate(in) + ADP + phosphate + H(+). In terms of biological role, part of the ABC transporter complex CysAWTP involved in sulfate/thiosulfate import. Responsible for energy coupling to the transport system. The sequence is that of Sulfate/thiosulfate import ATP-binding protein CysA from Pseudomonas syringae pv. tomato (strain ATCC BAA-871 / DC3000).